The following is a 567-amino-acid chain: Glutamate--tRNA ligase (567 aa).

The short motif at 106–116 is the 'HIGH' region element; sequence PNPDGPLHLGN.

This sequence belongs to the class-I aminoacyl-tRNA synthetase family. Glutamate--tRNA ligase type 2 subfamily.

It is found in the cytoplasm. It catalyses the reaction tRNA(Glu) + L-glutamate + ATP = L-glutamyl-tRNA(Glu) + AMP + diphosphate. Catalyzes the attachment of glutamate to tRNA(Glu) in a two-step reaction: glutamate is first activated by ATP to form Glu-AMP and then transferred to the acceptor end of tRNA(Glu). The sequence is that of Glutamate--tRNA ligase from Sulfolobus acidocaldarius (strain ATCC 33909 / DSM 639 / JCM 8929 / NBRC 15157 / NCIMB 11770).